A 546-amino-acid chain; its full sequence is MLLDTQLELAGGINNVTRILAPQGQVVLALKHPPHAPHLPDDVSLQSVLGEWQLSVQRTAEVSDQQLATIGKAISERQKLETLPYQTALDCPYRPLWHISPPQGLLNDPNGFIYHQGEYHLFYQWHPFVCEHKDKYWVHLKSLDLVHWQWQSVALTPSDWFDSHGVFSGHAVSHQQDLWLFYTGNTRLGVDRQRQTMQCAARMNANGEFEKLGPVIRCLPEGVTEHIRDPKVIYTQGKWHMLLGAQTLAHQGRLAVYHSDDLLHWHFDKLYGDELGNYGYMWECPDWFELQGEAFFVFGPQGIASANPHHTIEHQNRIFRATQNAQGEIALLQGWPLDEGFDFYAPQTAQTTDGRRVLCGWMGLPDETQHPSCDQGWIHQLTALRELEWREGKIYQHPLRELDTLRSEPHTLLLSDTVTELKAKSFDVQVTLPWGCQLRLMQNAQYCVTLTLDAENRLLRLDRSATQIRQGDTIRELKLDSPTVELRILADQSSLEIFINQGEHVMTSRIFTPLDATGISLHGASVDAKLYYMAPASAPFNLEVNV.

Substrate-binding positions include 105–108, glutamine 124, 167–168, 228–229, and glutamate 283; these read LLND, FS, and RD. The active site involves aspartate 108.

Belongs to the glycosyl hydrolase 32 family.

The protein localises to the cytoplasm. It catalyses the reaction Hydrolysis of terminal non-reducing beta-D-fructofuranoside residues in beta-D-fructofuranosides.. The protein operates within glycan biosynthesis; sucrose metabolism. In terms of biological role, enables the bacterium to metabolize sucrose as a sole carbon source. This chain is Probable sucrose-6-phosphate hydrolase, found in Vibrio cholerae.